Here is a 430-residue protein sequence, read N- to C-terminus: Serine--tRNA ligase (430 aa).

L-serine is bound at residue 235–237 (TAE). ATP is bound by residues 266–268 (RRE) and valine 282. Glutamate 289 provides a ligand contact to L-serine. 353-356 (EASS) contributes to the ATP binding site. An L-serine-binding site is contributed by serine 389.

Belongs to the class-II aminoacyl-tRNA synthetase family. Type-1 seryl-tRNA synthetase subfamily. As to quaternary structure, homodimer. The tRNA molecule binds across the dimer.

It localises to the cytoplasm. The enzyme catalyses tRNA(Ser) + L-serine + ATP = L-seryl-tRNA(Ser) + AMP + diphosphate + H(+). The catalysed reaction is tRNA(Sec) + L-serine + ATP = L-seryl-tRNA(Sec) + AMP + diphosphate + H(+). It functions in the pathway aminoacyl-tRNA biosynthesis; selenocysteinyl-tRNA(Sec) biosynthesis; L-seryl-tRNA(Sec) from L-serine and tRNA(Sec): step 1/1. In terms of biological role, catalyzes the attachment of serine to tRNA(Ser). Is also able to aminoacylate tRNA(Sec) with serine, to form the misacylated tRNA L-seryl-tRNA(Sec), which will be further converted into selenocysteinyl-tRNA(Sec). The chain is Serine--tRNA ligase from Chlorobium phaeovibrioides (strain DSM 265 / 1930) (Prosthecochloris vibrioformis (strain DSM 265)).